Consider the following 272-residue polypeptide: Tumor necrosis factor receptor superfamily member 4 (272 aa).

The first 19 residues, Met1–Gly19, serve as a signal peptide directing secretion. The Extracellular portion of the chain corresponds to Val20–Pro211. TNFR-Cys repeat units follow at residues Asn26 to His61 and Pro62 to Cys103. 8 disulfide bridges follow: Cys27/Cys38, Cys39/Cys52, Cys42/Cys60, Cys63/Cys77, Cys80/Cys95, Cys83/Cys103, Cys105/Cys123, and Cys126/Cys139. One copy of the TNFR-Cys 3; truncated repeat lies at Arg104–Val124. Residues Pro125–Glu165 form a TNFR-Cys 4 repeat. N-linked (GlcNAc...) asparagine glycosylation occurs at Asn144. Residues Cys145 and Cys164 are joined by a disulfide bond. A helical membrane pass occupies residues Ala212–Leu236. At Arg237–Ile272 the chain is on the cytoplasmic side.

As to quaternary structure, interacts with TRAF2, TRAF3 and TRAF5. As to expression, expressed in CD4(+) T-cells and in T-helper Th17 cells (at protein level).

The protein resides in the membrane. Receptor for TNFSF4/OX40L/GP34. Is a costimulatory molecule implicated in long-term T-cell immunity. The chain is Tumor necrosis factor receptor superfamily member 4 (Tnfrsf4) from Mus musculus (Mouse).